A 619-amino-acid chain; its full sequence is Chaperone protein HscA homolog (619 aa).

It belongs to the heat shock protein 70 family.

Chaperone involved in the maturation of iron-sulfur cluster-containing proteins. Has a low intrinsic ATPase activity which is markedly stimulated by HscB. This chain is Chaperone protein HscA homolog, found in Laribacter hongkongensis (strain HLHK9).